A 543-amino-acid chain; its full sequence is Bifunctional purine biosynthesis protein PurH (543 aa).

An MGS-like domain is found at 5–151; it reads NHARPIRRAL…KNHKDVTIVV (147 aa).

Belongs to the PurH family.

It carries out the reaction (6R)-10-formyltetrahydrofolate + 5-amino-1-(5-phospho-beta-D-ribosyl)imidazole-4-carboxamide = 5-formamido-1-(5-phospho-D-ribosyl)imidazole-4-carboxamide + (6S)-5,6,7,8-tetrahydrofolate. The catalysed reaction is IMP + H2O = 5-formamido-1-(5-phospho-D-ribosyl)imidazole-4-carboxamide. The protein operates within purine metabolism; IMP biosynthesis via de novo pathway; 5-formamido-1-(5-phospho-D-ribosyl)imidazole-4-carboxamide from 5-amino-1-(5-phospho-D-ribosyl)imidazole-4-carboxamide (10-formyl THF route): step 1/1. Its pathway is purine metabolism; IMP biosynthesis via de novo pathway; IMP from 5-formamido-1-(5-phospho-D-ribosyl)imidazole-4-carboxamide: step 1/1. The protein is Bifunctional purine biosynthesis protein PurH of Shewanella oneidensis (strain ATCC 700550 / JCM 31522 / CIP 106686 / LMG 19005 / NCIMB 14063 / MR-1).